The chain runs to 55 residues: Large ribosomal subunit protein bL33 (55 aa).

This sequence belongs to the bacterial ribosomal protein bL33 family.

The sequence is that of Large ribosomal subunit protein bL33 from Aeromonas hydrophila subsp. hydrophila (strain ATCC 7966 / DSM 30187 / BCRC 13018 / CCUG 14551 / JCM 1027 / KCTC 2358 / NCIMB 9240 / NCTC 8049).